A 466-amino-acid polypeptide reads, in one-letter code: Argininosuccinate lyase (466 aa).

This sequence belongs to the lyase 1 family. Argininosuccinate lyase subfamily.

The protein resides in the cytoplasm. The catalysed reaction is 2-(N(omega)-L-arginino)succinate = fumarate + L-arginine. It participates in amino-acid biosynthesis; L-arginine biosynthesis; L-arginine from L-ornithine and carbamoyl phosphate: step 3/3. The sequence is that of Argininosuccinate lyase from Brucella anthropi (strain ATCC 49188 / DSM 6882 / CCUG 24695 / JCM 21032 / LMG 3331 / NBRC 15819 / NCTC 12168 / Alc 37) (Ochrobactrum anthropi).